We begin with the raw amino-acid sequence, 208 residues long: Small ribosomal subunit protein uS4 (208 aa).

Residues 98 to 159 (RRLDNVVYRL…KSRKIVSIND (62 aa)) form the S4 RNA-binding domain.

Belongs to the universal ribosomal protein uS4 family. As to quaternary structure, part of the 30S ribosomal subunit. Contacts protein S5. The interaction surface between S4 and S5 is involved in control of translational fidelity.

One of the primary rRNA binding proteins, it binds directly to 16S rRNA where it nucleates assembly of the body of the 30S subunit. Its function is as follows. With S5 and S12 plays an important role in translational accuracy. In Pelobacter propionicus (strain DSM 2379 / NBRC 103807 / OttBd1), this protein is Small ribosomal subunit protein uS4.